The following is a 404-amino-acid chain: Probable tRNA sulfurtransferase (404 aa).

A THUMP domain is found at 60–165 (TAVAESLKQV…EEAAYLSYET (106 aa)). ATP is bound by residues 183–184 (ML), 208–209 (HF), Arg265, Gly287, and Gln296.

This sequence belongs to the ThiI family.

It is found in the cytoplasm. It catalyses the reaction [ThiI sulfur-carrier protein]-S-sulfanyl-L-cysteine + a uridine in tRNA + 2 reduced [2Fe-2S]-[ferredoxin] + ATP + H(+) = [ThiI sulfur-carrier protein]-L-cysteine + a 4-thiouridine in tRNA + 2 oxidized [2Fe-2S]-[ferredoxin] + AMP + diphosphate. The enzyme catalyses [ThiS sulfur-carrier protein]-C-terminal Gly-Gly-AMP + S-sulfanyl-L-cysteinyl-[cysteine desulfurase] + AH2 = [ThiS sulfur-carrier protein]-C-terminal-Gly-aminoethanethioate + L-cysteinyl-[cysteine desulfurase] + A + AMP + 2 H(+). Its pathway is cofactor biosynthesis; thiamine diphosphate biosynthesis. Functionally, catalyzes the ATP-dependent transfer of a sulfur to tRNA to produce 4-thiouridine in position 8 of tRNAs, which functions as a near-UV photosensor. Also catalyzes the transfer of sulfur to the sulfur carrier protein ThiS, forming ThiS-thiocarboxylate. This is a step in the synthesis of thiazole, in the thiamine biosynthesis pathway. The sulfur is donated as persulfide by IscS. The protein is Probable tRNA sulfurtransferase of Streptococcus pneumoniae (strain 70585).